Consider the following 1238-residue polypeptide: Virulence sensor protein BvgS (1238 aa).

A signal peptide spans 1–32 (MPAPHRLYPRSLICLAQALLVWALLAWAPAQA). At 33 to 307 (SQELTLVGKA…REQQWMANHP (275 aa)) the chain is on the cytoplasmic side. A helical transmembrane segment spans residues 308–331 (VVKVAVLNLFAPFTLFRTDEQFGG). The Periplasmic portion of the chain corresponds to 332–541 (ISAAVLQLLQ…PRTWYAYRNE (210 aa)). Residues 542–563 (IYLLIGLGLLSALLFLSWIVYL) form a helical membrane-spanning segment. Residues 564-1238 (RRQIRQRKRA…LEQRPHQGQP (675 aa)) are Cytoplasmic-facing. Residues 580-651 (QLEFMRVLID…MHEFLLTRMA (72 aa)) form the PAS domain. Positions 652–708 (AEREPRFEDRDVTLHGRTRHVYQWTVPYGDSLGELKGIIGGWIDITERAELLRELHD) constitute a PAC domain. Residues 726–948 (TMSHEIRTPM…TVSVDLRLTM (223 aa)) enclose the Histidine kinase domain. Position 729 is a phosphohistidine; by autocatalysis (histidine 729). Residues 974-1095 (RVLVVDDHKP…ALRQRLNEAA (122 aa)) form the Response regulatory domain. Residue aspartate 1023 is modified to 4-aspartylphosphate. In terms of domain architecture, HPt spans 1133-1228 (DEALIRQLLE…AALETQLRAW (96 aa)). Position 1172 is a phosphohistidine (histidine 1172).

Post-translationally, activation requires a sequential transfer of a phosphate group from a His in the primary transmitter domain, to an Asp in the receiver domain and to a His in the secondary transmitter domain.

It is found in the cell inner membrane. The enzyme catalyses ATP + protein L-histidine = ADP + protein N-phospho-L-histidine.. Its function is as follows. Member of the two-component regulatory system BvgS/BvgA. Phosphorylates BvgA via a four-step phosphorelay in response to environmental signals. The sequence is that of Virulence sensor protein BvgS (bvgS) from Bordetella parapertussis (strain 12822 / ATCC BAA-587 / NCTC 13253).